Here is a 167-residue protein sequence, read N- to C-terminus: uncharacterized protein (167 aa).

The tract at residues 148–167 (NKESRGENDGGEERESANIY) is disordered.

This is an uncharacterized protein from Homo sapiens (Human).